Consider the following 284-residue polypeptide: Pseudopaline exporter CntI (284 aa).

Helical transmembrane passes span 2-22 (VLDL…TFSV), 34-54 (LPAA…IYLL), 74-94 (GVMG…IPLA), 96-116 (ASIL…LFLG), 122-142 (AVYW…KPFS), 147-167 (SVYA…SVAI), 179-199 (IVFY…WNDF), 209-229 (GLLL…TRAF), 236-256 (IVAV…WLFW), and 259-279 (VPDA…IALS). 2 consecutive EamA domains span residues 8-138 (SGVL…LMIV) and 151-279 (VVGL…IALS).

This sequence belongs to the EamA transporter family.

It is found in the cell inner membrane. In terms of biological role, transports the metallophore pseudopaline, which is involved in the acquisition of nickel and zinc, and thus enables bacterial growth inside the host, where metal access is limited. Is probably involved in the export of pseudopaline. Essential for iron acquisition during the interaction with airway mucus secretions (AMS). The polypeptide is Pseudopaline exporter CntI (Pseudomonas aeruginosa (strain ATCC 15692 / DSM 22644 / CIP 104116 / JCM 14847 / LMG 12228 / 1C / PRS 101 / PAO1)).